A 411-amino-acid polypeptide reads, in one-letter code: Pyruvate dehydrogenase E1 component subunit alpha, mitochondrial (411 aa).

A mitochondrion-targeting transit peptide spans 1–29 (MFSRAVRLSRAALPIRVASQRVPIAARRS). Positions 111, 137, 138, 184, 186, 215, 216, 217, 244, and 246 each coordinate pyruvate. The thiamine diphosphate site is built by Tyr137, Arg138, Gly184, Val186, Asp215, Gly216, Ala217, and Asn244. Residue Asp215 coordinates Mg(2+). Mg(2+)-binding residues include Asn244 and Tyr246. A thiamine diphosphate-binding site is contributed by His311.

In terms of assembly, eukaryotic pyruvate dehydrogenase (PDH) complexes are organized as a core consisting of the oligomeric dihydrolipoamide acetyl-transferase (E2), around which are arranged multiple copies of pyruvate dehydrogenase (E1), dihydrolipoamide dehydrogenase (E3) and protein X (E3BP) bound by non-covalent bonds. The Chaetomium thermophilum PDH complex contains 60 E2 units, 12 E3BP units, about 20 E1 units, and 12 or more E3 units. The units are organized in 1 E2 60-mer, 4 E3BP trimers, about 20 E1 tetramers, and a maximum of 12 E3 dimers. Pyruvate dehydrogenase (E1) is active as a tetramer of 2 alpha and 2 beta subunits. The E3BP trimers are bound inside the icosahedral core with tetrahedral symmetry. Requires thiamine diphosphate as cofactor. Mg(2+) serves as cofactor.

The protein localises to the mitochondrion. It catalyses the reaction N(6)-[(R)-lipoyl]-L-lysyl-[protein] + pyruvate + H(+) = N(6)-[(R)-S(8)-acetyldihydrolipoyl]-L-lysyl-[protein] + CO2. Its function is as follows. The 10-megadalton pyruvate dehydrogenase complex contains multiple copies of three enzymatic components: pyruvate dehydrogenase (E1), dihydrolipoamide acetyltransferase (E2) and lipoamide dehydrogenase (E3) and catalyzes the overall oxidative decarboxylation of pyruvate to form acetyl-CoA and CO(2). Within the complex, pyruvate and thiamine pyrophosphate (TPP or vitamin B1) are bound by pyruvate dehydrogenase E1 subunits alpha and beta and pyruvate is decarboxylated leading to the 2-carbon hydrohyethyl bound to TPP. The E2 component contains covalently-bound lipoyl cofactors and transfers the hydroxyethyl group from TPP to an oxidized form of covalently bound lipoamide, and the resulting acetyl group is then transferred to free coenzyme A to form acetyl-CoA and reduced dihydrolipoamide-E2. Finally, the flavoprotein dihydrolipoamide dehydrogenase (E3) re-oxidizes the lipoyl group of dihydrolipoamide-E2 to form lipoamide-E2 and NADH. A fourth subunit, E3BP, is responsible for tethering E3 in proximity to the core, forming the entire metabolon. The chain is Pyruvate dehydrogenase E1 component subunit alpha, mitochondrial from Chaetomium thermophilum (strain DSM 1495 / CBS 144.50 / IMI 039719) (Thermochaetoides thermophila).